Reading from the N-terminus, the 162-residue chain is uncharacterized protein (162 aa).

This is an uncharacterized protein from Homo sapiens (Human).